A 79-amino-acid chain; its full sequence is Dolichyl-diphosphooligosaccharide--protein glycosyltransferase subunit DAD1 (79 aa).

The Lumenal segment spans residues 1-19; it reads AVATALIQVAYMGLVGSFP. A helical transmembrane segment spans residues 20–40; the sequence is FNSFLSGVLSCIGTAVLAVCL. Residues 41–58 lie on the Cytoplasmic side of the membrane; sequence RIQVNKDNKEFKDLPPER. Residues 59-79 traverse the membrane as a helical segment; sequence AFADFVLCNLVLHLVIMNFLG.

This sequence belongs to the DAD/OST2 family. As to quaternary structure, component of the oligosaccharyltransferase (OST) complex.

Its subcellular location is the endoplasmic reticulum membrane. Its pathway is protein modification; protein glycosylation. Subunit of the oligosaccharyl transferase (OST) complex that catalyzes the initial transfer of a defined glycan (Glc(3)Man(9)GlcNAc(2) in eukaryotes) from the lipid carrier dolichol-pyrophosphate to an asparagine residue within an Asn-X-Ser/Thr consensus motif in nascent polypeptide chains, the first step in protein N-glycosylation. N-glycosylation occurs cotranslationally and the complex associates with the Sec61 complex at the channel-forming translocon complex that mediates protein translocation across the endoplasmic reticulum (ER). All subunits are required for a maximal enzyme activity. The protein is Dolichyl-diphosphooligosaccharide--protein glycosyltransferase subunit DAD1 (DAD1) of Zea mays (Maize).